A 244-amino-acid polypeptide reads, in one-letter code: Small ribosomal subunit protein uS3 (244 aa).

The region spanning 39–107 is the KH type-2 domain; sequence VREMLRKKLA…PAHINVTEVR (69 aa). A disordered region spans residues 213 to 244; sequence VGQEKQDDSPRNDRNDRGDRGDRPSRPAREAR. Positions 216 to 244 are enriched in basic and acidic residues; it reads EKQDDSPRNDRNDRGDRGDRPSRPAREAR.

The protein belongs to the universal ribosomal protein uS3 family. In terms of assembly, part of the 30S ribosomal subunit. Forms a tight complex with proteins S10 and S14.

Its function is as follows. Binds the lower part of the 30S subunit head. Binds mRNA in the 70S ribosome, positioning it for translation. The polypeptide is Small ribosomal subunit protein uS3 (Xanthomonas oryzae pv. oryzae (strain MAFF 311018)).